The sequence spans 114 residues: MHEMSLMGGVFEAIEATLAHHHVKKVLLVKLKIGQLTNAEPDALQMAFAAFAQGTVCEGAELQIEMLPVKGRCRSCSEEFMVPGLIFACPVCQHLGIDITQGEELLLESLEVEE.

Residue H2 coordinates Ni(2+). 4 residues coordinate Zn(2+): C73, C76, C89, and C92.

The protein belongs to the HypA/HybF family.

Its function is as follows. Involved in the maturation of [NiFe] hydrogenases. Required for nickel insertion into the metal center of the hydrogenase. In Desulfitobacterium hafniense (strain DSM 10664 / DCB-2), this protein is Hydrogenase maturation factor HypA.